A 240-amino-acid polypeptide reads, in one-letter code: Protein OPG176 (240 aa).

Belongs to the orthopoxvirus OPG176 family. Tetramer. Interacts with host MYD88, TRF4, TICAM2 and MAL.

In terms of biological role, BCL2-like protein which disrupts the host immune response by inhibiting the TLR4 signaling pathway leading to NF-kappa-B activation. Acts close to the plasma membrane and targets several host TIR-domain containing adapter proteins including MYD88, TIRAP, TRIF and TICAM2. In turn, blocks the host NF-kappa-B and TRIF-mediated IRF3 activation. This chain is Protein OPG176 (OPG176), found in Cynomys gunnisoni (Gunnison's prairie dog).